The primary structure comprises 284 residues: 4-diphosphocytidyl-2-C-methyl-D-erythritol kinase (284 aa).

Lysine 14 is a catalytic residue. Residue 98 to 108 coordinates ATP; the sequence is PMGGGLGGGSS. Aspartate 140 is an active-site residue.

The protein belongs to the GHMP kinase family. IspE subfamily.

It carries out the reaction 4-CDP-2-C-methyl-D-erythritol + ATP = 4-CDP-2-C-methyl-D-erythritol 2-phosphate + ADP + H(+). It participates in isoprenoid biosynthesis; isopentenyl diphosphate biosynthesis via DXP pathway; isopentenyl diphosphate from 1-deoxy-D-xylulose 5-phosphate: step 3/6. Catalyzes the phosphorylation of the position 2 hydroxy group of 4-diphosphocytidyl-2C-methyl-D-erythritol. The chain is 4-diphosphocytidyl-2-C-methyl-D-erythritol kinase from Shewanella piezotolerans (strain WP3 / JCM 13877).